Consider the following 681-residue polypeptide: Minichromosome maintenance domain-containing protein 2 (681 aa).

Ser292 bears the Phosphoserine mark. The region spanning 533-621 (RQFTTEDFEK…LIAALLFETS (89 aa)) is the MCM domain.

In terms of biological role, plays an important role in meiotic recombination and associated DNA double-strand break repair. In Homo sapiens (Human), this protein is Minichromosome maintenance domain-containing protein 2 (MCMDC2).